A 661-amino-acid polypeptide reads, in one-letter code: Bifunctional xylanase/xylan deacetylase (661 aa).

Positions 1 to 27 (MKLPTLGKCVVRTLMGAVALGAISVNA) are cleaved as a signal peptide. Positions 29-226 (TLSSNSTGTN…SRGSSDITVS (198 aa)) constitute a GH11 domain. Catalysis depends on Glu116, which acts as the Nucleophile; for endoxylanase activity. The Proton donor; for endoxylanase activity role is filled by Glu213. The interval 220–259 (SSDITVSEGTSGGGTSSVGGASSSVNSSTGGGSSGGITVR) is disordered. A compositionally biased stretch (low complexity) spans 237–247 (VGGASSSVNSS). Residues 394 to 577 (SNCSGYVGIT…AKGLCPGRID (184 aa)) form a polysaccharide deacetylase region. The NodB homology domain occupies 398–574 (GYVGITFDDG…NLRAKGLCPG (177 aa)). Residues 578–610 (PNTGRAVAPSSSGGSSSVALSSSSRSSSSAGGN) are disordered. Low complexity predominate over residues 581–608 (GRAVAPSSSGGSSSVALSSSSRSSSSAG). The CBM10 domain occupies 616-645 (QCNWWGTFYPLCQTQTSGWGWENSRSCIST).

It in the N-terminal section; belongs to the glycosyl hydrolase 11 (cellulase G) family.

The protein localises to the secreted. It catalyses the reaction Endohydrolysis of (1-&gt;4)-beta-D-xylosidic linkages in xylans.. The catalysed reaction is Deacetylation of xylans and xylo-oligosaccharides.. It functions in the pathway glycan degradation; xylan degradation. Endo-acting xylanase which specifically cleaves internal linkages on the xylan backbone, releasing xylooligosaccharides. Is able to hydrolyze oat spelt xylan and the arabinoxylans from wheat and rye, releasing xylobiose as the major product. Also likely catalyzes, via its C-terminal domain, the removal of acetyl groups from acetylated xylan. Thus, has the capability of hydrolyzing acetylated xylan. Does not attack mannan, galactan, arabinan or any cellulosic substrates. The chain is Bifunctional xylanase/xylan deacetylase (xyn11A) from Cellvibrio japonicus (Pseudomonas fluorescens subsp. cellulosa).